Reading from the N-terminus, the 609-residue chain is Wee1-like protein kinase (609 aa).

Basic and acidic residues predominate over residues 1 to 10; the sequence is MAFRQSEHEM. Disordered stretches follow at residues 1 to 88 and 147 to 166; these read MAFR…SMSP and PLHNRKLPTQDTANVNPFTP. 3 positions are modified to phosphoserine: Ser-23, Ser-25, and Ser-27. The span at 37–48 shows a compositional bias: basic and acidic residues; sequence RFADDDFDKDTP. The residue at position 47 (Thr-47) is a Phosphothreonine. Ser-52 is modified (phosphoserine). A compositionally biased stretch (polar residues) spans 153–165; the sequence is LPTQDTANVNPFT. Thr-165 carries the post-translational modification Phosphothreonine. Ser-168 is modified (phosphoserine). The Protein kinase domain maps to 239–517; the sequence is FMQVNVIGVG…SQSIFSHPIL (279 aa). ATP-binding positions include 245–253 and Lys-268; that span reads IGVGEFGVV. Asp-361 acts as the Proton acceptor in catalysis. Mg(2+) is bound by residues Asn-366 and Asp-412.

This sequence belongs to the protein kinase superfamily. Ser/Thr protein kinase family. WEE1 subfamily. Mg(2+) serves as cofactor. In terms of processing, phosphorylated during M and G1 phases. As to expression, expressed in embryos; expression remains high in the proliferating cells of the central nervous system well after cells in the rest of the embryo have ceased dividing.

It is found in the nucleus. It carries out the reaction L-tyrosyl-[protein] + ATP = O-phospho-L-tyrosyl-[protein] + ADP + H(+). Negatively regulated by phosphorylation in the M-phase. In terms of biological role, acts as a negative regulator of entry into mitosis (G2 to M transition). This kinase specifically phosphorylates and inactivates cyclin B1-complexed CDC2. The protein is Wee1-like protein kinase of Drosophila melanogaster (Fruit fly).